Reading from the N-terminus, the 158-residue chain is Ribosome-binding factor A (158 aa).

The interval 130–158 is disordered; the sequence is TAQYAGDADPYKHDDEAEAEGDEFESDEE. Residues 145-158 show a composition bias toward acidic residues; the sequence is EAEAEGDEFESDEE.

The protein belongs to the RbfA family. As to quaternary structure, monomer. Binds 30S ribosomal subunits, but not 50S ribosomal subunits or 70S ribosomes.

The protein localises to the cytoplasm. In terms of biological role, one of several proteins that assist in the late maturation steps of the functional core of the 30S ribosomal subunit. Associates with free 30S ribosomal subunits (but not with 30S subunits that are part of 70S ribosomes or polysomes). Required for efficient processing of 16S rRNA. May interact with the 5'-terminal helix region of 16S rRNA. This Bifidobacterium longum subsp. infantis (strain ATCC 15697 / DSM 20088 / JCM 1222 / NCTC 11817 / S12) protein is Ribosome-binding factor A.